The primary structure comprises 158 residues: Peroxidase (158 aa).

Proline 2 serves as a coordination point for substrate. Histidine 32 lines the heme b pocket. Threonine 33 provides a ligand contact to Ca(2+). A disulfide bridge links cysteine 39 with cysteine 64. Asparagine 48 is a glycosylation site (N-linked (GlcNAc...) asparagine). Ca(2+)-binding residues include aspartate 78, threonine 81, and aspartate 86.

This sequence belongs to the peroxidase family. Classical plant (class III) peroxidase subfamily. It depends on Ca(2+) as a cofactor. Requires heme b as cofactor.

The enzyme catalyses 2 a phenolic donor + H2O2 = 2 a phenolic radical donor + 2 H2O. Removal of H(2)O(2), oxidation of toxic reductants, biosynthesis and degradation of lignin, suberization, auxin catabolism, response to environmental stresses such as wounding, pathogen attack and oxidative stress. These functions might be dependent on each isozyme/isoform in each plant tissue. In Lupinus polyphyllus (Large-leaved lupine), this protein is Peroxidase.